A 4910-amino-acid chain; its full sequence is Midasin (4910 aa).

AAA-ATPase protomer regions lie at residues 305-528 (IQNS…DILF) and 636-975 (MEQI…TDII). ATP-binding positions include 315 to 322 (GKAGSGKT) and 653 to 660 (GETGTGKT). An interaction with RIX1 region spans residues 695 to 803 (VNSKTVAVPI…KKFEAQSSSI (109 aa)). At threonine 1026 the chain carries Phosphothreonine. AAA-ATPase protomer regions lie at residues 1054–1280 (HYII…WALR), 1345–1624 (KGMR…VEFI), 1732–1985 (RVVR…QLLI), and 2036–2286 (VYES…DELH). ATP-binding positions include 1083–1090 (GPTSSGKT), 1368–1375 (GETGCGKT), 1747–1754 (GSPGVGKT), and 2054–2061 (GPSNSGKT). Residues 2372 to 4075 (EVGKWANNVL…DGEGAQNNNK (1704 aa)) form a linker region. Serine 2971 bears the Phosphoserine mark. 3 disordered regions span residues 4045–4547 (SPQP…EKMD), 4555–4574 (SDIDAHDANNDVDSKKSGFI), and 4579–4600 (SEEDFENELSNEHFSADQEDDS). The segment covering 4078-4088 (EQDEDLTEDAQ) has biased composition (acidic residues). A compositionally biased stretch (basic and acidic residues) spans 4089–4098 (NENKEQQDKD). Acidic residues predominate over residues 4099-4154 (ERDDENEDDAVEMEGDMAGELEDLSNGEENDDEDTDSEEEELDEEIDDLNEDDPNA). The span at 4155–4174 (IDDKMWDDKASDNSKEKDTD) shows a compositional bias: basic and acidic residues. Acidic residues-rich tracts occupy residues 4202–4244 (GDED…EDLE), 4251–4274 (ETLDLPEDMNLDSEHEESDEDVDM), and 4288–4358 (GNED…EEEL). Residue serine 4353 is modified to Phosphoserine. Residues 4359–4372 (KQDAAMEENKEKGG) show a composition bias toward basic and acidic residues. Threonine 4388 carries the phosphothreonine modification. Composition is skewed to basic and acidic residues over residues 4435 to 4447 (DVTKNNEESREEA) and 4481 to 4495 (LEKNNERPDEFEHVE). The segment covering 4498–4516 (NTETDTQALGSATQDQLQT) has biased composition (polar residues). Acidic residues predominate over residues 4517–4531 (IDEDMAIDDDREEQE). Position 4555 is a phosphoserine (serine 4555). Residues 4557 to 4570 (IDAHDANNDVDSKK) are compositionally biased toward basic and acidic residues. The region spanning 4704–4899 (QIMIALDDSK…SELPEMLSLI (196 aa)) is the VWFA domain.

Belongs to the midasin family. Associates with pre-60S ribosomes in the nucleoplasm. Interacts (via its hexameric AAA ATPase ring) with the RIX1 complex (via RIX1); this interaction is crucial for recruitment of MDN1 to the pre-ribosomal particle. Interacts (via VWFA/MIDAS domain) with YTM1 (via UBL domain). Interacts (via VWFA/MIDAS domain) with RSA4 (via UBL domain).

It is found in the nucleus. The protein localises to the nucleolus. Its subcellular location is the nucleoplasm. Functionally, nuclear chaperone required for maturation and nuclear export of pre-60S ribosome subunits. Functions at successive maturation steps to remove ribosomal factors at critical transition points, first driving the exit of early pre-60S particles from the nucleolus and then driving late pre-60S particles from the nucleus. At an early stage in 60S maturation, mediates the dissociation of the NOP7 complex (YTM1-ERB1-NOP7) from early pre-60S particles, rendering them competent for export from the nucleolus to the nucleoplasm. Subsequently recruited to the nucleoplasmic particles through interaction with the RIX1 complex. This binding is only possible if the 5S RNP at the central protuberance has undergone the rotation to complete its maturation. After remodeling, removes the ribosome biogenesis factor RSA4 in an ATP hydrolysis-driven step from pre-60S ribosomal subunits, rendering them competent for export from the nucleoplasm to the cytoplasm. Activates the GTPase activity of NOG2, which disengages from the pre-60S particle upon GTP hydrolysis, thus freeing its binding site for the nuclear export factor NMD3. The chain is Midasin (MDN1) from Saccharomyces cerevisiae (strain ATCC 204508 / S288c) (Baker's yeast).